We begin with the raw amino-acid sequence, 77 residues long: Conotoxin Cl6.12 (77 aa).

A signal peptide spans 1–20 (MKFYLLLTAALLLTAVIIEA). Positions 21–36 (APTDHQDEARDLMREE) are excised as a propeptide. 3 disulfides stabilise this stretch: cysteine 43–cysteine 58, cysteine 51–cysteine 62, and cysteine 57–cysteine 68.

In terms of tissue distribution, expressed by the venom duct.

The protein resides in the secreted. The protein is Conotoxin Cl6.12 of Californiconus californicus (California cone).